A 311-amino-acid polypeptide reads, in one-letter code: Phosphopantothenate--cysteine ligase (311 aa).

Ala-2 is modified (N-acetylalanine).

Belongs to the PPC synthetase family. As to quaternary structure, homodimer.

It catalyses the reaction (R)-4'-phosphopantothenate + L-cysteine + ATP = N-[(R)-4-phosphopantothenoyl]-L-cysteine + AMP + diphosphate + H(+). The catalysed reaction is (R)-4'-phosphopantothenate + L-cysteine + CTP = N-[(R)-4-phosphopantothenoyl]-L-cysteine + CMP + diphosphate + H(+). It participates in cofactor biosynthesis; coenzyme A biosynthesis; CoA from (R)-pantothenate: step 2/5. Catalyzes the second step in the biosynthesis of coenzyme A from vitamin B5, where cysteine is conjugated to 4'-phosphopantothenate to form 4-phosphopantothenoylcysteine. Has a preference for ATP over CTP as a cosubstrate. The sequence is that of Phosphopantothenate--cysteine ligase (Ppcs) from Mus musculus (Mouse).